Consider the following 176-residue polypeptide: Large ribosomal subunit protein uL6 (176 aa).

The segment covering 151–170 has biased composition (basic and acidic residues); sequence RPPEPYKGKGVRYADEQVRR. A disordered region spans residues 151-176; that stretch reads RPPEPYKGKGVRYADEQVRRKEAKKK.

Belongs to the universal ribosomal protein uL6 family. As to quaternary structure, part of the 50S ribosomal subunit.

In terms of biological role, this protein binds to the 23S rRNA, and is important in its secondary structure. It is located near the subunit interface in the base of the L7/L12 stalk, and near the tRNA binding site of the peptidyltransferase center. This chain is Large ribosomal subunit protein uL6, found in Shewanella piezotolerans (strain WP3 / JCM 13877).